The chain runs to 676 residues: Lutropin-choriogonadotropic hormone receptor (676 aa).

The N-terminal stretch at 1–29 (MKQPLLALQLLKLLLLLLLPLPPLPRALR) is a signal peptide. At 30-340 (EARCCPEPCN…EDIMGYDFLR (311 aa)) the chain is on the extracellular side. Residue Asn103 is glycosylated (N-linked (GlcNAc...) asparagine). LRR repeat units lie at residues 126 to 151 (LPRL…IFSS), 153 to 175 (TNFI…AFQG), 176 to 200 (MNNE…AFNG), 201 to 224 (TTVI…AFRG), and 225 to 248 (ATGP…GLES). 2 N-linked (GlcNAc...) asparagine glycosylation sites follow: Asn178 and Asn199. Residue Tyr308 is modified to Sulfotyrosine. A helical transmembrane segment spans residues 341 to 362 (VLIWLINILAIMGNMTVLFVLL). The Cytoplasmic segment spans residues 363–372 (TSRYKLTVPR). A helical membrane pass occupies residues 373–393 (FLMCNLSFADFCMGLYLLLIA). Over 394–416 (SVDSQTKGQYYNHAIDWQTGSGC) the chain is Extracellular. A disulfide bond links Cys416 and Cys491. The helical transmembrane segment at 417 to 439 (NTAGFFTVFASELSVYTLTVITL) threads the bilayer. Over 440 to 459 (ERWHTITYAIHLDQKLRLRH) the chain is Cytoplasmic. The chain crosses the membrane as a helical span at residues 460–482 (AILIMLGGWLFSSLIAMLPLVGV). The Extracellular portion of the chain corresponds to 483 to 502 (SNYMKVSICFPMDVETTLSQ). Residues 503 to 526 (IYILTILILNVVAFIIICACYIKI) traverse the membrane as a helical segment. At 527-547 (YFAVRNPELMATNKDTKIAKK) the chain is on the cytoplasmic side. The chain crosses the membrane as a helical span at residues 548–571 (MAILIFTDFTCMAPISFFAISAAF). Residues 572 to 582 (KMPLITVTNSK) lie on the Extracellular side of the membrane. Residues 583 to 604 (VLLVLFYPINSCANPFLYAIFT) traverse the membrane as a helical segment. The Cytoplasmic portion of the chain corresponds to 605–676 (KTFRRDFFLL…LLDKTCYKEY (72 aa)). Residues Cys620 and Cys621 are each lipidated (S-palmitoyl cysteine).

It belongs to the G-protein coupled receptor 1 family. FSH/LSH/TSH subfamily. Post-translationally, sulfated.

It localises to the cell membrane. Its function is as follows. Receptor for lutropin-choriogonadotropic hormone. The activity of this receptor is mediated by G proteins which activate adenylate cyclase. This chain is Lutropin-choriogonadotropic hormone receptor (LHCGR), found in Callithrix jacchus (White-tufted-ear marmoset).